Here is a 289-residue protein sequence, read N- to C-terminus: 4-diphosphocytidyl-2-C-methyl-D-erythritol kinase (289 aa).

Lysine 15 is a catalytic residue. ATP is bound at residue 100–110 (PVSAGLAGGSA). Residue aspartate 140 is part of the active site.

This sequence belongs to the GHMP kinase family. IspE subfamily.

The enzyme catalyses 4-CDP-2-C-methyl-D-erythritol + ATP = 4-CDP-2-C-methyl-D-erythritol 2-phosphate + ADP + H(+). Its pathway is isoprenoid biosynthesis; isopentenyl diphosphate biosynthesis via DXP pathway; isopentenyl diphosphate from 1-deoxy-D-xylulose 5-phosphate: step 3/6. In terms of biological role, catalyzes the phosphorylation of the position 2 hydroxy group of 4-diphosphocytidyl-2C-methyl-D-erythritol. The polypeptide is 4-diphosphocytidyl-2-C-methyl-D-erythritol kinase (Anaplasma marginale (strain Florida)).